We begin with the raw amino-acid sequence, 251 residues long: MRKVIIKENPSEEEIKELLDLAEKHGGVVTIFARCKVHYEGRAKSELGEGDRIIIIKPDGSFLIHQNKKREPVNWQPPGSKVTFKENSIISIRRRPYERLEVEIIEPYSLVVFLAEDYEELALTGSEAEMANLIFENPRVIEEGFKPIYREKPIRHGIVDVMGVDKDGNIVVLELKRRKADLHAVSQLKRYVDSLKEEYGENVRGILVAPSLTEGAKKLLEKEGLEFRKLEPPKKGNEKRSKQKTLDFFTP.

Positions 230-240 (LEPPKKGNEKR) are enriched in basic and acidic residues. The interval 230–251 (LEPPKKGNEKRSKQKTLDFFTP) is disordered.

Belongs to the NucS endonuclease family. As to quaternary structure, homodimer. Interacts with PCNA.

The protein localises to the cytoplasm. Its activity is regulated as follows. Activity is modulated by PCNA. PCNA increases the binding affinity of NucS towards ssDNA as well as branched DNA substrates carrying either 3' or 5' flaps. PCNA is also required for optimal loading of NucS on its substrates and to direct activity towards ss/dsDNA junction. In terms of biological role, cleaves both 3' and 5' ssDNA extremities of branched DNA structures. Binds to ssDNA. The protein is Endonuclease NucS of Pyrococcus abyssi (strain GE5 / Orsay).